The following is a 333-amino-acid chain: L-lactate dehydrogenase (333 aa).

NAD(+) is bound by residues 29-57 (GQVGMACAYSILQQNLANELCLVDVVADK) and arginine 99. Residues arginine 106, asparagine 138, and arginine 169 each contribute to the substrate site. Asparagine 138 serves as a coordination point for NAD(+). Histidine 193 (proton acceptor) is an active-site residue. Threonine 249 provides a ligand contact to substrate.

This sequence belongs to the LDH/MDH superfamily. LDH family. In terms of assembly, homotetramer.

It localises to the cytoplasm. It catalyses the reaction (S)-lactate + NAD(+) = pyruvate + NADH + H(+). It participates in fermentation; pyruvate fermentation to lactate; (S)-lactate from pyruvate: step 1/1. This chain is L-lactate dehydrogenase (ldh-1), found in Caenorhabditis elegans.